The chain runs to 251 residues: Hydroxyacylglutathione hydrolase (251 aa).

Residues H53, H55, D57, H58, H110, D127, and H165 each contribute to the Zn(2+) site.

The protein belongs to the metallo-beta-lactamase superfamily. Glyoxalase II family. Monomer. Zn(2+) is required as a cofactor.

The enzyme catalyses an S-(2-hydroxyacyl)glutathione + H2O = a 2-hydroxy carboxylate + glutathione + H(+). It participates in secondary metabolite metabolism; methylglyoxal degradation; (R)-lactate from methylglyoxal: step 2/2. Thiolesterase that catalyzes the hydrolysis of S-D-lactoyl-glutathione to form glutathione and D-lactic acid. The sequence is that of Hydroxyacylglutathione hydrolase from Yersinia pestis (strain Pestoides F).